We begin with the raw amino-acid sequence, 107 residues long: Latency-related protein 2 (107 aa).

Over residues 1-44 (MAPPLPRTPTPTHPHSHAPPLPRTPTPAHPHSHAPPLPRTPTPT) the composition is skewed to pro residues. Residues 1 to 63 (MAPPLPRTPT…SIQHRQGKDT (63 aa)) form a disordered region. 3 tandem repeats follow at residues 2-17 (APPLPRTPTPTHPHSH), 18-33 (APPLPRTPTPAHPHSH), and 34-49 (APPLPRTPTPTHPHSH). The 3 X 17 AA tandem repeats stretch occupies residues 2–49 (APPLPRTPTPTHPHSHAPPLPRTPTPAHPHSHAPPLPRTPTPTHPHSH). A compositionally biased stretch (basic residues) spans 46–58 (PHSHAPPRSIQHR).

The polypeptide is Latency-related protein 2 (Homo sapiens (Human)).